The chain runs to 112 residues: MNEAGLIVDSFNIEDWNLGDYTQEDDHINKFCEKIGKNEYDLERDFQEDLNELSINSNRLELYDSSKKNVLGTSSDWVVKTKSCPLDPHHIHIVGDTKIIRTKQYTLDGSII.

This is an uncharacterized protein from Dictyostelium discoideum (Social amoeba).